A 145-amino-acid chain; its full sequence is Maximins 5/H4 type 1 (145 aa).

Residues 1-18 form the signal peptide; the sequence is MNFKYIVAVSFLIASAYA. 2 propeptides span residues 19-43 and 74-124; these read RSVQ…REIR and TAEE…KEKR. L144 is modified (leucine amide).

The protein belongs to the bombinin family. Expressed by the skin glands.

Its subcellular location is the secreted. Maximin-5 shows antibacterial activity against both Gram-positive and Gram-negative bacteria. The only exception is the resistance of E.coli. Also shows antimicrobial activity against fungi C.albicans, A.flavus and P.uticale. It has little hemolytic activity. It does not possess a significant cytotoxicity against tumor cell lines. It does not possess a significant anti-HIV activity. Functionally, maximin-H4 shows antibacterial activity against both Gram-positive and Gram-negative bacteria. It also shows antimicrobial activity against the fungus C.albicans. Shows strong hemolytic activity. The polypeptide is Maximins 5/H4 type 1 (Bombina maxima (Giant fire-bellied toad)).